A 59-amino-acid chain; its full sequence is Large ribosomal subunit protein uL30 (59 aa).

This sequence belongs to the universal ribosomal protein uL30 family. As to quaternary structure, part of the 50S ribosomal subunit.

In Citrifermentans bemidjiense (strain ATCC BAA-1014 / DSM 16622 / JCM 12645 / Bem) (Geobacter bemidjiensis), this protein is Large ribosomal subunit protein uL30.